The primary structure comprises 356 residues: Chaperone protein DnaJ (356 aa).

A J domain is found at 5-69; the sequence is DYYQILGVSK…ERRKEYDRIL (65 aa). The CR-type zinc finger occupies 121–197; sequence GCEKDIEYER…CSGRGRVAMH (77 aa). The Zn(2+) site is built by C134, C137, C151, C154, C171, C174, C185, and C188. CXXCXGXG motif repeat units lie at residues 134–141, 151–158, 171–178, and 185–192; these read CPTCEGKG, CHACEGTG, CSVCKGRG, and CPACSGRG.

It belongs to the DnaJ family. In terms of assembly, homodimer. It depends on Zn(2+) as a cofactor.

Its subcellular location is the cytoplasm. Functionally, participates actively in the response to hyperosmotic and heat shock by preventing the aggregation of stress-denatured proteins and by disaggregating proteins, also in an autonomous, DnaK-independent fashion. Unfolded proteins bind initially to DnaJ; upon interaction with the DnaJ-bound protein, DnaK hydrolyzes its bound ATP, resulting in the formation of a stable complex. GrpE releases ADP from DnaK; ATP binding to DnaK triggers the release of the substrate protein, thus completing the reaction cycle. Several rounds of ATP-dependent interactions between DnaJ, DnaK and GrpE are required for fully efficient folding. Also involved, together with DnaK and GrpE, in the DNA replication of plasmids through activation of initiation proteins. This Hydrogenobacter thermophilus (strain DSM 6534 / IAM 12695 / TK-6) protein is Chaperone protein DnaJ.